The chain runs to 368 residues: tRNA-specific 2-thiouridylase MnmA (368 aa).

ATP is bound by residues 23–30 (ALSGGVDS) and Leu49. Cys110 acts as the Nucleophile in catalysis. Cysteines 110 and 209 form a disulfide. Gly135 lines the ATP pocket. Residues 159–161 (KDQ) are interaction with tRNA. Cys209 functions as the Cysteine persulfide intermediate in the catalytic mechanism. An interaction with tRNA region spans residues 314-315 (RY).

It belongs to the MnmA/TRMU family.

It localises to the cytoplasm. It carries out the reaction S-sulfanyl-L-cysteinyl-[protein] + uridine(34) in tRNA + AH2 + ATP = 2-thiouridine(34) in tRNA + L-cysteinyl-[protein] + A + AMP + diphosphate + H(+). Its function is as follows. Catalyzes the 2-thiolation of uridine at the wobble position (U34) of tRNA, leading to the formation of s(2)U34. The chain is tRNA-specific 2-thiouridylase MnmA from Synechococcus sp. (strain JA-2-3B'a(2-13)) (Cyanobacteria bacterium Yellowstone B-Prime).